Consider the following 967-residue polypeptide: Sarcosine oxidase subunit alpha (967 aa).

NAD(+) is bound by residues Ala141, Asp160, Glu161, Arg162, Ser168, Val207, Ala420, and Thr427. Residues Thr694 and Glu786 each coordinate (6R)-5,10-methylene-5,6,7,8-tetrahydrofolate.

The protein belongs to the GcvT family. Heterotetramer composed of subunits alpha (SoxA), beta (SoxB), gamma (SoxG) and delta (SoxD). NAD(+) serves as cofactor.

The protein resides in the cytoplasm. The enzyme catalyses sarcosine + (6S)-5,6,7,8-tetrahydrofolate + O2 = (6R)-5,10-methylene-5,6,7,8-tetrahydrofolate + glycine + H2O2. It catalyses the reaction sarcosine + O2 + H2O = formaldehyde + glycine + H2O2. In terms of biological role, in the presence of tetrahydrofolate, catalyzes the oxidative demethylation of sarcosine to yield glycine, 5,10-methylenetetrahydrofolate and hydrogen peroxide. In the absence of tetrahydrofolate, catalyzes the oxidative demethylation of sarcosine to yield glycine, formaldehyde and hydrogen peroxide. This chain is Sarcosine oxidase subunit alpha, found in Corynebacterium sp. (strain P-1).